Reading from the N-terminus, the 357-residue chain is Phenylalanine--tRNA ligase alpha subunit (357 aa).

A Mg(2+)-binding site is contributed by glutamate 259.

Belongs to the class-II aminoacyl-tRNA synthetase family. Phe-tRNA synthetase alpha subunit type 1 subfamily. As to quaternary structure, tetramer of two alpha and two beta subunits. Mg(2+) serves as cofactor.

It is found in the cytoplasm. It catalyses the reaction tRNA(Phe) + L-phenylalanine + ATP = L-phenylalanyl-tRNA(Phe) + AMP + diphosphate + H(+). The sequence is that of Phenylalanine--tRNA ligase alpha subunit from Jannaschia sp. (strain CCS1).